The sequence spans 435 residues: 3-phosphoshikimate 1-carboxyvinyltransferase (435 aa).

Residues Lys-25, Ser-26, and Arg-30 each coordinate 3-phosphoshikimate. Position 25 (Lys-25) interacts with phosphoenolpyruvate. Phosphoenolpyruvate contacts are provided by Gly-99 and Arg-130. 3-phosphoshikimate is bound by residues Ser-176, Ser-177, Gln-178, Ser-204, Asp-319, Asn-342, and Lys-346. Gln-178 provides a ligand contact to phosphoenolpyruvate. Asp-319 acts as the Proton acceptor in catalysis. 3 residues coordinate phosphoenolpyruvate: Arg-350, Arg-394, and Lys-419.

The protein belongs to the EPSP synthase family. As to quaternary structure, monomer.

The protein localises to the cytoplasm. The catalysed reaction is 3-phosphoshikimate + phosphoenolpyruvate = 5-O-(1-carboxyvinyl)-3-phosphoshikimate + phosphate. It functions in the pathway metabolic intermediate biosynthesis; chorismate biosynthesis; chorismate from D-erythrose 4-phosphate and phosphoenolpyruvate: step 6/7. In terms of biological role, catalyzes the transfer of the enolpyruvyl moiety of phosphoenolpyruvate (PEP) to the 5-hydroxyl of shikimate-3-phosphate (S3P) to produce enolpyruvyl shikimate-3-phosphate and inorganic phosphate. The sequence is that of 3-phosphoshikimate 1-carboxyvinyltransferase from Haemophilus ducreyi (strain 35000HP / ATCC 700724).